Reading from the N-terminus, the 520-residue chain is Tetratricopeptide repeat protein 6 (520 aa).

TPR repeat units follow at residues 57–90 (MTMC…ISHS), 101–138 (ADCL…DKNS), 139–172 (YTAF…DATE), 176–209 (LNTF…SRTN), 210–243 (GSLC…NPCF), 245–280 (DAYV…NPAY), 281–314 (IKAR…DPKN), 320–347 (GRAV…ISTT), 348–381 (AEFL…NPKY), 382–415 (SLAY…DPEN), 416–449 (EYVL…CPFW), 450–483 (AAVY…KPND), and 484–517 (ALVY…EDYA).

The polypeptide is Tetratricopeptide repeat protein 6 (Homo sapiens (Human)).